Reading from the N-terminus, the 180-residue chain is Signal peptidase complex subunit 2 (180 aa).

The Cytoplasmic portion of the chain corresponds to 1–45 (MSDERITVVNKWDGPTVKNGLDEVVKKILNDKVGWTEQHNLMNLR). A helical transmembrane segment spans residues 46–66 (LLISFIGVAFSAFACGYDFYA). Over 67–72 (PFPKSK) the chain is Lumenal. The chain crosses the membrane as a helical span at residues 73–93 (IVLLVCSVSYFICMGVLQLFQ). Residues 94 to 180 (WYVEKDCFYE…LWARLIRSEQ (87 aa)) lie on the Cytoplasmic side of the membrane.

This sequence belongs to the SPCS2 family. Component of the signal peptidase complex (SPC) composed of a catalytic subunit sec-11 and three accessory subunits spcs-1, spcs-2 and spcs-3. The complex induces a local thinning of the ER membrane which is used to measure the length of the signal peptide (SP) h-region of protein substrates. This ensures the selectivity of the complex towards h-regions shorter than 18-20 amino acids.

Its subcellular location is the endoplasmic reticulum membrane. Component of the signal peptidase complex (SPC) which catalyzes the cleavage of N-terminal signal sequences from nascent proteins as they are translocated into the lumen of the endoplasmic reticulum. Enhances the enzymatic activity of SPC and facilitates the interactions between different components of the translocation site. The sequence is that of Signal peptidase complex subunit 2 from Caenorhabditis briggsae.